The sequence spans 307 residues: Aspartate carbamoyltransferase catalytic subunit (307 aa).

The carbamoyl phosphate site is built by Arg-54 and Thr-55. An L-aspartate-binding site is contributed by Lys-83. Carbamoyl phosphate contacts are provided by Arg-104, His-132, and Gln-135. Residues Arg-165 and Arg-228 each coordinate L-aspartate. 2 residues coordinate carbamoyl phosphate: Leu-267 and Pro-268.

The protein belongs to the aspartate/ornithine carbamoyltransferase superfamily. ATCase family. Heterododecamer (2C3:3R2) of six catalytic PyrB chains organized as two trimers (C3), and six regulatory PyrI chains organized as three dimers (R2).

The enzyme catalyses carbamoyl phosphate + L-aspartate = N-carbamoyl-L-aspartate + phosphate + H(+). It functions in the pathway pyrimidine metabolism; UMP biosynthesis via de novo pathway; (S)-dihydroorotate from bicarbonate: step 2/3. Its function is as follows. Catalyzes the condensation of carbamoyl phosphate and aspartate to form carbamoyl aspartate and inorganic phosphate, the committed step in the de novo pyrimidine nucleotide biosynthesis pathway. The polypeptide is Aspartate carbamoyltransferase catalytic subunit (Clostridium botulinum (strain ATCC 19397 / Type A)).